Reading from the N-terminus, the 292-residue chain is uncharacterized protein (292 aa).

Positions 62-81 are disordered; sequence ESSSDSDMGFHESQQNQKSN.

This is an uncharacterized protein from Homo sapiens (Human).